The following is a 727-amino-acid chain: Probable metal-nicotianamine transporter YSL14 (727 aa).

Composition is skewed to low complexity over residues 1–10 (MAQHTAAAAG) and 18–27 (AEAAAAAAAG). Residues 1–61 (MAQHTAAAAG…RNGGADDPDA (61 aa)) are disordered. Residues 45–54 (AGGGGGGRNG) are compositionally biased toward gly residues. 14 helical membrane-spanning segments follow: residues 84–104 (AFVVSALLAVMFSVIVMKLNL), 107–127 (GIIPSLNVSAGLLGFFFVRLW), 152–172 (CVVSAYGIAFSGGFGSYLFGM), 194–214 (LGWMIGFLFLVSFIGLFALVP), 256–276 (LGKYFLFSFFWGFFQWFYTAG), 314–334 (IVNVSVLLGGILSWGVMWPLI), 359–379 (VFISIALILGDGLYNFLKVLI), 432–452 (VAYGGYVVVAALSIGTLPEIF), 460–480 (ILVAYIVAPVLAFCNAYGSGL), 492–512 (LAIFVFGAWAGLSHGGVLVGL), 546–566 (FISQVIGTGMGCVIAPCVFWL), 604–624 (PENCLTLCYIFFAAAIAINLI), 646–666 (FYIGSYFAIDMFLGSVILFVW), and 681–701 (VASGLICGDGIWTLPQSILAL).

It belongs to the YSL (TC 2.A.67.2) family. In terms of tissue distribution, expressed in leaves and at low levels in roots.

The protein localises to the membrane. Functionally, may be involved in the transport of nicotianamine-chelated metals. This chain is Probable metal-nicotianamine transporter YSL14 (YSL14), found in Oryza sativa subsp. japonica (Rice).